A 66-amino-acid polypeptide reads, in one-letter code: Large ribosomal subunit protein bL33c (66 aa).

This sequence belongs to the bacterial ribosomal protein bL33 family.

Its subcellular location is the plastid. The protein localises to the chloroplast. This is Large ribosomal subunit protein bL33c from Oryza nivara (Indian wild rice).